Here is a 136-residue protein sequence, read N- to C-terminus: Translation initiation factor 5A (136 aa).

Lys-36 carries the hypusine modification.

It belongs to the eIF-5A family.

It localises to the cytoplasm. Functionally, functions by promoting the formation of the first peptide bond. The protein is Translation initiation factor 5A (eIF5A) of Hyperthermus butylicus (strain DSM 5456 / JCM 9403 / PLM1-5).